Here is a 943-residue protein sequence, read N- to C-terminus: Translation initiation factor IF-2 (943 aa).

Over residues 99–113 (VKAAQTQAAPVQPEQ) the composition is skewed to low complexity. Residues 99–354 (VKAAQTQAAP…LEPNQHAFQA (256 aa)) form a disordered region. Positions 117–141 (DAVKARAEAAARAEARAKAEAEAAK) are enriched in basic and acidic residues. A compositionally biased stretch (low complexity) spans 145–172 (AKAGNKAKPAAQKPTEAKAETAPVAAET). Residues 173-197 (KPAEPKEKAVKPKHERNGKGKDAKK) are compositionally biased toward basic and acidic residues. The segment covering 200-215 (KPAAPAVPQPVVSAEE) has biased composition (low complexity). The span at 216-250 (QAQRDEEARRAAALRAHQEALLKEKQERQARREAM) shows a compositional bias: basic and acidic residues. Positions 251–264 (KQQAEQQAKAAQEA) are enriched in low complexity. Composition is skewed to basic and acidic residues over residues 295-308 (AKKE…DEGQ) and 319-335 (GGRD…ERVR). Residues 443-612 (PRPPVVTVMG…LLEAEVLELT (170 aa)) form the tr-type G domain. The G1 stretch occupies residues 452–459 (GHVDHGKT). Residue 452–459 (GHVDHGKT) participates in GTP binding. The interval 477–481 (GITQH) is G2. The interval 498–501 (DTPG) is G3. GTP is bound by residues 498 to 502 (DTPGH) and 552 to 555 (NKID). Residues 552–555 (NKID) are G4. The G5 stretch occupies residues 588–590 (SAK).

Belongs to the TRAFAC class translation factor GTPase superfamily. Classic translation factor GTPase family. IF-2 subfamily.

It localises to the cytoplasm. One of the essential components for the initiation of protein synthesis. Protects formylmethionyl-tRNA from spontaneous hydrolysis and promotes its binding to the 30S ribosomal subunits. Also involved in the hydrolysis of GTP during the formation of the 70S ribosomal complex. This is Translation initiation factor IF-2 from Neisseria gonorrhoeae (strain NCCP11945).